Reading from the N-terminus, the 303-residue chain is Agmatinase (303 aa).

Positions 126, 149, 151, 153, 230, and 232 each coordinate Mn(2+).

This sequence belongs to the arginase family. Agmatinase subfamily. The cofactor is Mn(2+).

It carries out the reaction agmatine + H2O = urea + putrescine. Functionally, catalyzes the formation of putrescine from agmatine. The protein is Agmatinase (speB) of Blochmanniella floridana.